We begin with the raw amino-acid sequence, 336 residues long: Cytoskeleton protein RodZ (336 aa).

Topologically, residues 1 to 111 are cytoplasmic; it reads MNTEATHDQN…LGKRRKKRDG (111 aa). The region spanning 19-71 is the HTH cro/C1-type domain; it reads LRNAREQLGLSQQAVAERLCLKVSTVRDIEEDKAPADLASTFLRGYIRSYARL. Residues 30-49 constitute a DNA-binding region (H-T-H motif); that stretch reads QQAVAERLCLKVSTVRDIEE. Residues 112-132 form a helical; Signal-anchor for type II membrane protein membrane-spanning segment; that stretch reads WLMTFTWLVLFVVIGLSGAWW. Topologically, residues 133-336 are periplasmic; sequence WQDHKAQQEE…TLNAEQSPAQ (204 aa). Polar residues predominate over residues 148–164; the sequence is DQSSAELNNNQSQSVPL. The disordered stretch occupies residues 148 to 245; sequence DQSSAELNNN…PLPTDQAGVT (98 aa). The segment covering 165–201 has biased composition (low complexity); the sequence is DTSTTTDQAMATTPTSPVDTTATNTQTPAATTAPSPT. Residues 202-217 are compositionally biased toward polar residues; the sequence is VDSQQNAVVPPSQANV. The segment covering 218 to 240 has biased composition (low complexity); sequence DTAATPAPAATTTPDGAAPLPTD.

This sequence belongs to the RodZ family.

Its subcellular location is the cell inner membrane. Its function is as follows. Cytoskeletal protein that is involved in cell-shape control through regulation of the length of the long axis. In Escherichia coli O7:K1 (strain IAI39 / ExPEC), this protein is Cytoskeleton protein RodZ.